Consider the following 337-residue polypeptide: Fructose-1,6-bisphosphatase class 1 (337 aa).

Mg(2+)-binding residues include glutamate 89, aspartate 112, leucine 114, and aspartate 115. Substrate contacts are provided by residues aspartate 115 to serine 118, asparagine 208, tyrosine 241, and lysine 271. Residue glutamate 277 participates in Mg(2+) binding.

Belongs to the FBPase class 1 family. Homotetramer. Requires Mg(2+) as cofactor.

The protein localises to the cytoplasm. The catalysed reaction is beta-D-fructose 1,6-bisphosphate + H2O = beta-D-fructose 6-phosphate + phosphate. It participates in carbohydrate biosynthesis; gluconeogenesis. The protein is Fructose-1,6-bisphosphatase class 1 of Psychromonas ingrahamii (strain DSM 17664 / CCUG 51855 / 37).